The sequence spans 258 residues: MYTTGLIGKNINYSESPEIHNNYYKKNNIPFFYKIFNLKQDQIDDFIKNLHKNNIKGFNVTIPYKETILQYLNDIVYPADKIGAVNTVAVQEDKLIGYNTDYIGFIKSLQYYNIQVKNFKCLIIGSGGSAKCIYYALKELNARDICIVSRNPEKARLKFEKKVKILNIKDENKLDRYDLIVNCTPIGGPNFKEQKPIELKEIKKNCVVYDLNYTPKRSKLLKEAKENGAFIINGEKMLIFQAYSAIGLWCLNGIKGGR.

Residues 14–16 (SES) and T61 each bind shikimate. Residue K65 is the Proton acceptor of the active site. 2 residues coordinate shikimate: N86 and D101. NADP(+) is bound by residues 125 to 129 (GSGGS) and L211. Y213 contributes to the shikimate binding site. An NADP(+)-binding site is contributed by G234.

The protein belongs to the shikimate dehydrogenase family. Homodimer.

The enzyme catalyses shikimate + NADP(+) = 3-dehydroshikimate + NADPH + H(+). Its pathway is metabolic intermediate biosynthesis; chorismate biosynthesis; chorismate from D-erythrose 4-phosphate and phosphoenolpyruvate: step 4/7. In terms of biological role, involved in the biosynthesis of the chorismate, which leads to the biosynthesis of aromatic amino acids. Catalyzes the reversible NADPH linked reduction of 3-dehydroshikimate (DHSA) to yield shikimate (SA). This chain is Shikimate dehydrogenase (NADP(+)), found in Clostridium botulinum (strain 657 / Type Ba4).